Here is a 286-residue protein sequence, read N- to C-terminus: Beta-lactamase SHV-2 (286 aa).

The N-terminal stretch at methionine 1 to alanine 21 is a signal peptide. Residue serine 66 is the Acyl-ester intermediate of the active site. Cysteine 73 and cysteine 119 are oxidised to a cystine. Glutamate 164 serves as the catalytic Proton acceptor. Lysine 230–glycine 232 provides a ligand contact to substrate.

This sequence belongs to the class-A beta-lactamase family.

The enzyme catalyses a beta-lactam + H2O = a substituted beta-amino acid. This enzyme hydrolyzes cefotaxime, ceftazidime and other broad spectrum cephalosporins. The polypeptide is Beta-lactamase SHV-2 (bla) (Escherichia coli).